The sequence spans 396 residues: 8-amino-7-oxononanoate synthase (396 aa).

Residue R31 participates in substrate binding. 118 to 119 (GY) contributes to the pyridoxal 5'-phosphate binding site. Residue H143 coordinates substrate. Pyridoxal 5'-phosphate-binding residues include S189, H217, and T245. An N6-(pyridoxal phosphate)lysine modification is found at K248. T362 contacts substrate.

It belongs to the class-II pyridoxal-phosphate-dependent aminotransferase family. BioF subfamily. As to quaternary structure, homodimer. Pyridoxal 5'-phosphate serves as cofactor.

It carries out the reaction 6-carboxyhexanoyl-[ACP] + L-alanine + H(+) = (8S)-8-amino-7-oxononanoate + holo-[ACP] + CO2. It functions in the pathway cofactor biosynthesis; biotin biosynthesis. Its function is as follows. Catalyzes the decarboxylative condensation of pimeloyl-[acyl-carrier protein] and L-alanine to produce 8-amino-7-oxononanoate (AON), [acyl-carrier protein], and carbon dioxide. This chain is 8-amino-7-oxononanoate synthase, found in Methylobacillus flagellatus (strain ATCC 51484 / DSM 6875 / VKM B-1610 / KT).